The following is a 77-amino-acid chain: Large ribosomal subunit protein eL14 (77 aa).

This sequence belongs to the eukaryotic ribosomal protein eL14 family.

This chain is Large ribosomal subunit protein eL14, found in Methanococcus maripaludis (strain C7 / ATCC BAA-1331).